Consider the following 286-residue polypeptide: 4-hydroxybenzoate octaprenyltransferase (286 aa).

7 helical membrane passes run Ile-20–Met-40, Leu-43–Ile-63, Ile-95–Val-115, Phe-142–Val-162, Trp-167–Val-187, Gln-210–Ala-230, and Leu-234–Ile-254.

Belongs to the UbiA prenyltransferase family. The cofactor is Mg(2+).

The protein localises to the cell inner membrane. It carries out the reaction all-trans-octaprenyl diphosphate + 4-hydroxybenzoate = 4-hydroxy-3-(all-trans-octaprenyl)benzoate + diphosphate. It functions in the pathway cofactor biosynthesis; ubiquinone biosynthesis. Its function is as follows. Catalyzes the prenylation of para-hydroxybenzoate (PHB) with an all-trans polyprenyl group. Mediates the second step in the final reaction sequence of ubiquinone-8 (UQ-8) biosynthesis, which is the condensation of the polyisoprenoid side chain with PHB, generating the first membrane-bound Q intermediate 3-octaprenyl-4-hydroxybenzoate. The sequence is that of 4-hydroxybenzoate octaprenyltransferase from Shewanella sediminis (strain HAW-EB3).